Reading from the N-terminus, the 342-residue chain is S-adenosylmethionine:tRNA ribosyltransferase-isomerase (342 aa).

Belongs to the QueA family. Monomer.

The protein localises to the cytoplasm. It catalyses the reaction 7-aminomethyl-7-carbaguanosine(34) in tRNA + S-adenosyl-L-methionine = epoxyqueuosine(34) in tRNA + adenine + L-methionine + 2 H(+). The protein operates within tRNA modification; tRNA-queuosine biosynthesis. Its function is as follows. Transfers and isomerizes the ribose moiety from AdoMet to the 7-aminomethyl group of 7-deazaguanine (preQ1-tRNA) to give epoxyqueuosine (oQ-tRNA). This is S-adenosylmethionine:tRNA ribosyltransferase-isomerase from Campylobacter jejuni (strain RM1221).